The chain runs to 512 residues: MESVIFSINGEIIQVNKEIITASPYNFFKRIQEHHINDEAIILNGINYHAFESLLDYMRWKKINITVNNVEMILVAAVIIDIPPVVDLCVKTMIHNINSTNCIRMFNFSKRYGIKKLYNASMLEIINNITAVTSDPEFGKLSKDELTTILSHENVNVNHEDVTAMILLKWIHKNPNDVDIINILHPKFMTNTMCNAISLLGLTISKSTKPVTRNGIKHNIVVIKNSDYISTITHYSPRTEYWTIVGNTDRQFYNANVLYNCLYIIGGMINNRHVYSVSRVDLKTKKWKTVTNMSSLKSEVSTCVNDGKLYVIGGLEFSISTGVAEYLKHGTSKWIRLPNLITPRYSGASVFVNDDIYVMGGVYTTYEKYVVLNDVECFTKNRWIKKSPMPRHHSIVYAIEYDGDIYAITGITHETRNYLYKYIVKEDKWIELYMYFNHVGKMFVCSCGDYILIIADAKYEYYPKSNTWILFDMSTRNIEYYDMFTKDETPKCNVTHKSLPSFLSNCEKQFLQ.

Residues Glu-2–Val-67 enclose the BTB domain. Residues Cys-102–Asn-176 enclose the BACK domain. Kelch repeat units lie at residues Ile-216 to Cys-261, Leu-262 to Gly-307, Leu-309 to Asp-354, Ile-356 to Gly-403, Ile-405 to Asp-449, and Leu-452 to Ser-498.

Belongs to the poxviruses Kelch family.

The polypeptide is Kelch repeat protein C2 (Camelus).